The chain runs to 130 residues: Large ribosomal subunit protein uL14 (130 aa).

The protein belongs to the universal ribosomal protein uL14 family. As to quaternary structure, part of the 50S ribosomal subunit. Forms a cluster with proteins L3 and L19. In the 70S ribosome, L14 and L19 interact and together make contacts with the 16S rRNA in bridges B5 and B8.

In terms of biological role, binds to 23S rRNA. Forms part of two intersubunit bridges in the 70S ribosome. This is Large ribosomal subunit protein uL14 from Helicobacter pylori (strain P12).